The sequence spans 361 residues: Phospho-N-acetylmuramoyl-pentapeptide-transferase (361 aa).

10 consecutive transmembrane segments (helical) span residues 28–48 (LSMF…IKFF), 70–90 (IGTP…GILL), 94–114 (LSNY…LLGA), 129–149 (VSFK…IYGL), 169–189 (LIIN…VGSS), 205–225 (PVIL…NIVF), 237–257 (MGEV…FLWF), 264–284 (IFMG…IGII), 289–309 (IVLA…IIQV), and 338–358 (TVVI…LATL).

The protein belongs to the glycosyltransferase 4 family. MraY subfamily. The cofactor is Mg(2+).

It localises to the cell inner membrane. The enzyme catalyses UDP-N-acetyl-alpha-D-muramoyl-L-alanyl-gamma-D-glutamyl-meso-2,6-diaminopimeloyl-D-alanyl-D-alanine + di-trans,octa-cis-undecaprenyl phosphate = di-trans,octa-cis-undecaprenyl diphospho-N-acetyl-alpha-D-muramoyl-L-alanyl-D-glutamyl-meso-2,6-diaminopimeloyl-D-alanyl-D-alanine + UMP. The protein operates within cell wall biogenesis; peptidoglycan biosynthesis. Catalyzes the initial step of the lipid cycle reactions in the biosynthesis of the cell wall peptidoglycan: transfers peptidoglycan precursor phospho-MurNAc-pentapeptide from UDP-MurNAc-pentapeptide onto the lipid carrier undecaprenyl phosphate, yielding undecaprenyl-pyrophosphoryl-MurNAc-pentapeptide, known as lipid I. This chain is Phospho-N-acetylmuramoyl-pentapeptide-transferase, found in Pelagibacter ubique (strain HTCC1062).